The primary structure comprises 364 residues: Spermidine/putrescine import ATP-binding protein PotA (364 aa).

Residues 6-236 (IEIRQIYKSY…PANLHVAMFI (231 aa)) enclose the ABC transporter domain. Residue 38–45 (GPSGCGKT) participates in ATP binding.

It belongs to the ABC transporter superfamily. Spermidine/putrescine importer (TC 3.A.1.11.1) family. As to quaternary structure, the complex is composed of two ATP-binding proteins (PotA), two transmembrane proteins (PotB and PotC) and a solute-binding protein (PotD).

It is found in the cell inner membrane. The catalysed reaction is ATP + H2O + polyamine-[polyamine-binding protein]Side 1 = ADP + phosphate + polyamineSide 2 + [polyamine-binding protein]Side 1.. In terms of biological role, part of the ABC transporter complex PotABCD involved in spermidine/putrescine import. Responsible for energy coupling to the transport system. This is Spermidine/putrescine import ATP-binding protein PotA from Legionella pneumophila subsp. pneumophila (strain Philadelphia 1 / ATCC 33152 / DSM 7513).